A 183-amino-acid chain; its full sequence is Tumor necrosis factor ligand superfamily member 4 (183 aa).

Residues 1-23 are Cytoplasmic-facing; sequence MERVQPLEENVGNAARPRFERNK. Residues 24 to 50 form a helical; Signal-anchor for type II membrane protein membrane-spanning segment; the sequence is LLLVASVIQGLGLLLCFTYICLHFSAL. The region spanning 51–173 is the THD domain; sequence QVSHRYPRIQ…HVNGGELILI (123 aa). Residues 51–183 are Extracellular-facing; the sequence is QVSHRYPRIQ…HQNPGEFCVL (133 aa). N-linked (GlcNAc...) asparagine glycosylation is found at N90, N114, N152, and N157. A disulfide bridge links C97 with C181.

It belongs to the tumor necrosis factor family. Homotrimer.

It is found in the membrane. In terms of biological role, cytokine that binds to TNFRSF4. Co-stimulates T-cell proliferation and cytokine production. This Homo sapiens (Human) protein is Tumor necrosis factor ligand superfamily member 4 (TNFSF4).